The primary structure comprises 422 residues: Proton-gated ion channel subunit pbo-6 (422 aa).

Residues 1-20 (MQCSFLTIFIFITTVTVGVA) form the signal peptide. The Extracellular segment spans residues 21–233 (EFSEQYQGSS…IKVARKPFYY (213 aa)). The cysteines at positions 151 and 165 are disulfide-linked. 3 consecutive transmembrane segments (helical) span residues 234-254 (LISL…GLFA), 268-288 (LGVT…EKVP), and 294-314 (VPLL…ATIL). The Cytoplasmic portion of the chain corresponds to 315-378 (TSTVMRVHAK…GEVSRRMDYL (64 aa)). The helical transmembrane segment at 379–399 (LASVFIIIISTPTLYLFYMCF) threads the bilayer.

This sequence belongs to the ligand-gated ion channel (TC 1.A.9) family. Acetylcholine receptor (TC 1.A.9.1) subfamily. The functional channel is a hetero-oligomer of pbo-5 and pbo-6. As to expression, expressed in the posterior body muscles.

It localises to the membrane. Functionally, forms a proton-gated ion channel with pbo-5 that is activated by acidification of the posterior coelomic space, leading to posterior body wall muscle contraction (pBoc) during the defecation cycle. Not necessary for stimulation of posterior body contraction (pBoc). Does not bind neurotransmitters such as acetylcholine, gamma-aminobutyric acid, glycine, serotonin, glutamate or choline. In Caenorhabditis elegans, this protein is Proton-gated ion channel subunit pbo-6.